We begin with the raw amino-acid sequence, 395 residues long: D-alanine--D-alanine ligase (395 aa).

In terms of domain architecture, ATP-grasp spans 172–391 (KVVLDAAGIP…YTELITRLIE (220 aa)). 204 to 266 (DAGLTYPLFV…EQGIDGREIE (63 aa)) lines the ATP pocket. Residues D345, E358, and N360 each contribute to the Mg(2+) site.

This sequence belongs to the D-alanine--D-alanine ligase family. Requires Mg(2+) as cofactor. The cofactor is Mn(2+).

Its subcellular location is the cytoplasm. It catalyses the reaction 2 D-alanine + ATP = D-alanyl-D-alanine + ADP + phosphate + H(+). The protein operates within cell wall biogenesis; peptidoglycan biosynthesis. In terms of biological role, cell wall formation. The sequence is that of D-alanine--D-alanine ligase from Bifidobacterium longum (strain DJO10A).